A 120-amino-acid chain; its full sequence is NAD(P)H-quinone oxidoreductase subunit 3, chloroplastic (120 aa).

The next 3 membrane-spanning stretches (helical) occupy residues 10–30, 64–84, and 89–109; these read FWLF…ISKI, MFAL…PWAM, and LGIS…IGLI.

This sequence belongs to the complex I subunit 3 family. In terms of assembly, NDH is composed of at least 16 different subunits, 5 of which are encoded in the nucleus.

It is found in the plastid. The protein resides in the chloroplast thylakoid membrane. It carries out the reaction a plastoquinone + NADH + (n+1) H(+)(in) = a plastoquinol + NAD(+) + n H(+)(out). It catalyses the reaction a plastoquinone + NADPH + (n+1) H(+)(in) = a plastoquinol + NADP(+) + n H(+)(out). Its function is as follows. NDH shuttles electrons from NAD(P)H:plastoquinone, via FMN and iron-sulfur (Fe-S) centers, to quinones in the photosynthetic chain and possibly in a chloroplast respiratory chain. The immediate electron acceptor for the enzyme in this species is believed to be plastoquinone. Couples the redox reaction to proton translocation, and thus conserves the redox energy in a proton gradient. This is NAD(P)H-quinone oxidoreductase subunit 3, chloroplastic from Angiopteris evecta (Mule's foot fern).